A 221-amino-acid chain; its full sequence is Pyridoxine/pyridoxamine 5'-phosphate oxidase (221 aa).

Residues 14 to 17 (RNEY) and Lys-73 contribute to the substrate site. Residues 68 to 73 (RTVLLK), 83 to 84 (FT), Lys-90, and Gln-112 contribute to the FMN site. Residues Tyr-130, Arg-134, and Ser-138 each coordinate substrate. FMN-binding positions include 147-148 (QS) and Trp-193. 199–201 (RLH) contributes to the substrate binding site. Arg-203 lines the FMN pocket.

The protein belongs to the pyridoxamine 5'-phosphate oxidase family. In terms of assembly, homodimer. FMN serves as cofactor.

It catalyses the reaction pyridoxamine 5'-phosphate + O2 + H2O = pyridoxal 5'-phosphate + H2O2 + NH4(+). The catalysed reaction is pyridoxine 5'-phosphate + O2 = pyridoxal 5'-phosphate + H2O2. It functions in the pathway cofactor metabolism; pyridoxal 5'-phosphate salvage; pyridoxal 5'-phosphate from pyridoxamine 5'-phosphate: step 1/1. Its pathway is cofactor metabolism; pyridoxal 5'-phosphate salvage; pyridoxal 5'-phosphate from pyridoxine 5'-phosphate: step 1/1. Catalyzes the oxidation of either pyridoxine 5'-phosphate (PNP) or pyridoxamine 5'-phosphate (PMP) into pyridoxal 5'-phosphate (PLP). The polypeptide is Pyridoxine/pyridoxamine 5'-phosphate oxidase (Salinispora arenicola (strain CNS-205)).